A 378-amino-acid polypeptide reads, in one-letter code: Probable pectin lyase A (378 aa).

Positions 1-19 (MKFPAFITAIISIASLSSA) are cleaved as a signal peptide. Intrachain disulfides connect C82/C101 and C91/C225. The active site involves R255. C321 and C329 are oxidised to a cystine.

Belongs to the polysaccharide lyase 1 family.

It is found in the secreted. The catalysed reaction is Eliminative cleavage of (1-&gt;4)-alpha-D-galacturonan methyl ester to give oligosaccharides with 4-deoxy-6-O-methyl-alpha-D-galact-4-enuronosyl groups at their non-reducing ends.. In terms of biological role, pectinolytic enzymes consist of four classes of enzymes: pectin lyase, polygalacturonase, pectin methylesterase and rhamnogalacturonase. Among pectinolytic enzymes, pectin lyase is the most important in depolymerization of pectin, since it cleaves internal glycosidic bonds of highly methylated pectins. The sequence is that of Probable pectin lyase A (pelA) from Aspergillus terreus (strain NIH 2624 / FGSC A1156).